The sequence spans 1069 residues: Adenylate-forming reductase (1069 aa).

An adenylation (A) domain region spans residues 20 to 391; the sequence is HPEDPKAVKS…WKLRQDINYR (372 aa). AMP is bound by residues His262, 357 to 358, Thr362, and 437 to 440; these read AH and AVGR. A Carrier domain is found at 576 to 656; sequence DSLEEDLKDL…KLGASLRHLA (81 aa). Ser612 is modified (O-(pantetheine 4'-phosphoryl)serine). The interval 686–1032 is reductase (R) domain; that stretch reads TVLLTGSTGN…TGKVILDTSR (347 aa). NADP(+) contacts are provided by residues 693–696, Arg719, 785–787, Tyr863, and Lys867; these read TGNL and NAW.

It belongs to the adenylate-forming reductase family.

The catalysed reaction is 5-methylorsellinate + ATP + NADPH + H(+) = 2,4-dihydroxy 5,6-dimethylbenzaldehyde + AMP + diphosphate + NADP(+). Its pathway is secondary metabolite biosynthesis. In terms of biological role, non-canonical non-ribosomal peptide synthetase; part of the cluster A that mediates the biosynthesis of azasperpyranones, members of the azaphilone family that exhibit anti-cancer activities. Azasperpyranones are synthesized by 2 clusters, A and B. Cluster A is responsible for the production of the polyhydric phenol moiety while the azaphilonoid scaffold is produced by the cluster B. The non-reducing polyketide synthase ATEG_03629 produces 5-methyl orsellinic acid, which is then reduced to 5-methyl orsellinic aldehyde by the NRPS-like protein ATEG_03630. 5-methyl orsellinic aldehyde is then first hydroxylated by the FAD-dependent monooxygenase ATEG_03635 and subsequently hydroxylated by the cytochrome P450 monooxygenase ATEG_03631 to produce the unstable polyhydric phenol precursor of azasperpyranones. On the other hand, the polyketide synthase ATEG_07659 is responsible for producing the 3,5-dimethyloctadienone moiety from acetyl-CoA, three malonyl-CoA, and two S-adenosyl methionines (SAM). The 3,5-dimethyloctadienone moiety is then loaded onto the SAT domain of ATEG_07661 and extended with four malonyl-CoA and one SAM, which leads to the formation of 2,4-dihydroxy-6-(5,7-dimethyl-2-oxo-trans-3-trans-5-nonadienyl)-3-methylbenzaldehyde (compound 8) after reductive release and aldol condensation. The FAD-dependent monooxygenase ATEG_07662 is the next enzyme in the biosynthesis sequence and hydroxylates the side chain at the benzylic position of compound 8. In Aspergillus nidulans, afoF, the ortholog of the FAD-dependent oxygenase ATEG_07660, is the key enzyme for the biosynthesis of asperfuranone by catalyzing the hydroxylation at C-8 of to prevent the formation of a six-membered ring hemiacetal intermediate and thus facilitating the formation of a five-membered ring to produce asperfuranone. In Aspergillus terreus, ATEG_07660 is probably not functional, which leads to the formation of the six-membered ring hemiacetal intermediate presperpyranone instead of asperfuranone. Finally, ATEG_03636 is involved in the condensation of the polyhydric phenol moiety produced by cluster A and the perasperpyranone precursor produced by cluster B, to yield azasperpyranone A. Further modifications of azasperpyranone A result in the production of derivatives, including azasperpyranone B to F. In Aspergillus terreus (strain NIH 2624 / FGSC A1156), this protein is Adenylate-forming reductase.